A 162-amino-acid polypeptide reads, in one-letter code: MRVHQPETIEMTVPAKSEFVGVVRLTVSGIANRLGYTYDDIEDIKIAVAEACTNVVDHAYDEGGTMGLSFHLYEDRMEIIVTDQGQSFDMDAFRESLGPIDGSKPIQDLKEGGLGLFLINTLMDKVEMKEDSGVVLAMTKFLQRDEVDNRVDGISATQTEQR.

It belongs to the anti-sigma-factor family.

It catalyses the reaction L-seryl-[protein] + ATP = O-phospho-L-seryl-[protein] + ADP + H(+). It carries out the reaction L-threonyl-[protein] + ATP = O-phospho-L-threonyl-[protein] + ADP + H(+). Its function is as follows. Negative regulator of sigma-B activity. Phosphorylates and inactivates its specific antagonist protein, RsbV. Upon phosphorylation of RsbV, RsbW is released and binds to sigma-B, thereby blocking its ability to form an RNA polymerase holoenzyme (E-sigma-B). This is Serine-protein kinase RsbW from Halalkalibacterium halodurans (strain ATCC BAA-125 / DSM 18197 / FERM 7344 / JCM 9153 / C-125) (Bacillus halodurans).